Here is a 427-residue protein sequence, read N- to C-terminus: Trigger factor (427 aa).

One can recognise a PPIase FKBP-type domain in the interval 163–248; the sequence is GDTVVIDFVG…VNEVKAKELP (86 aa).

Belongs to the FKBP-type PPIase family. Tig subfamily.

It localises to the cytoplasm. The catalysed reaction is [protein]-peptidylproline (omega=180) = [protein]-peptidylproline (omega=0). Functionally, involved in protein export. Acts as a chaperone by maintaining the newly synthesized protein in an open conformation. Functions as a peptidyl-prolyl cis-trans isomerase. In Lactococcus lactis subsp. cremoris (strain MG1363), this protein is Trigger factor.